We begin with the raw amino-acid sequence, 214 residues long: Large ribosomal subunit protein uL3 (214 aa).

The protein belongs to the universal ribosomal protein uL3 family. Part of the 50S ribosomal subunit. Forms a cluster with proteins L14 and L19.

Functionally, one of the primary rRNA binding proteins, it binds directly near the 3'-end of the 23S rRNA, where it nucleates assembly of the 50S subunit. The protein is Large ribosomal subunit protein uL3 of Streptomyces coelicolor (strain ATCC BAA-471 / A3(2) / M145).